A 199-amino-acid polypeptide reads, in one-letter code: Protein MA_3591 (199 aa).

Positions Thr5 to Glu196 constitute an AMMECR1 domain.

This is Protein MA_3591 from Methanosarcina acetivorans (strain ATCC 35395 / DSM 2834 / JCM 12185 / C2A).